The following is a 341-amino-acid chain: Anthranilate phosphoribosyltransferase (341 aa).

5-phospho-alpha-D-ribose 1-diphosphate is bound by residues glycine 79, 82 to 83 (GD), threonine 87, 89 to 92 (NIST), 107 to 115 (KHGNRAASS), and alanine 119. Glycine 79 is an anthranilate binding site. A Mg(2+)-binding site is contributed by serine 91. Asparagine 110 contacts anthranilate. Arginine 165 is an anthranilate binding site. 2 residues coordinate Mg(2+): aspartate 224 and glutamate 225.

This sequence belongs to the anthranilate phosphoribosyltransferase family. Homodimer. It depends on Mg(2+) as a cofactor.

It carries out the reaction N-(5-phospho-beta-D-ribosyl)anthranilate + diphosphate = 5-phospho-alpha-D-ribose 1-diphosphate + anthranilate. It functions in the pathway amino-acid biosynthesis; L-tryptophan biosynthesis; L-tryptophan from chorismate: step 2/5. Functionally, catalyzes the transfer of the phosphoribosyl group of 5-phosphorylribose-1-pyrophosphate (PRPP) to anthranilate to yield N-(5'-phosphoribosyl)-anthranilate (PRA). The polypeptide is Anthranilate phosphoribosyltransferase (Lacticaseibacillus casei (strain BL23) (Lactobacillus casei)).